The sequence spans 276 residues: Dermonecrotic toxin Ls4SicTox-alphaIII1i (276 aa).

The active site involves His-3. Mg(2+) contacts are provided by Glu-23 and Asp-25. The active-site Nucleophile is His-38. Cys-42 and Cys-48 are disulfide-bonded. Asp-82 lines the Mg(2+) pocket.

This sequence belongs to the arthropod phospholipase D family. Class I subfamily. Mg(2+) is required as a cofactor. Expressed by the venom gland.

The protein localises to the secreted. It carries out the reaction an N-(acyl)-sphingosylphosphocholine = an N-(acyl)-sphingosyl-1,3-cyclic phosphate + choline. It catalyses the reaction an N-(acyl)-sphingosylphosphoethanolamine = an N-(acyl)-sphingosyl-1,3-cyclic phosphate + ethanolamine. The enzyme catalyses a 1-acyl-sn-glycero-3-phosphocholine = a 1-acyl-sn-glycero-2,3-cyclic phosphate + choline. The catalysed reaction is a 1-acyl-sn-glycero-3-phosphoethanolamine = a 1-acyl-sn-glycero-2,3-cyclic phosphate + ethanolamine. Dermonecrotic toxins cleave the phosphodiester linkage between the phosphate and headgroup of certain phospholipids (sphingolipid and lysolipid substrates), forming an alcohol (often choline) and a cyclic phosphate. This toxin acts on sphingomyelin (SM). It may also act on ceramide phosphoethanolamine (CPE), lysophosphatidylcholine (LPC) and lysophosphatidylethanolamine (LPE), but not on lysophosphatidylserine (LPS), and lysophosphatidylglycerol (LPG). It acts by transphosphatidylation, releasing exclusively cyclic phosphate products as second products. Induces dermonecrosis, hemolysis, increased vascular permeability, edema, inflammatory response, and platelet aggregation. The sequence is that of Dermonecrotic toxin Ls4SicTox-alphaIII1i from Loxosceles sp. (strain 4 GJB-2008) (Recluse spider).